We begin with the raw amino-acid sequence, 876 residues long: Alanine--tRNA ligase (876 aa).

N6-acetyllysine is present on Lys74. The Zn(2+) site is built by His564, His568, Cys666, and His670.

Belongs to the class-II aminoacyl-tRNA synthetase family. Homotetramer. The cofactor is Zn(2+).

It is found in the cytoplasm. The catalysed reaction is tRNA(Ala) + L-alanine + ATP = L-alanyl-tRNA(Ala) + AMP + diphosphate. Functionally, catalyzes the attachment of alanine to tRNA(Ala) in a two-step reaction: alanine is first activated by ATP to form Ala-AMP and then transferred to the acceptor end of tRNA(Ala). Also edits incorrectly charged Ser-tRNA(Ala) and Gly-tRNA(Ala) via its editing domain. This Escherichia coli O9:H4 (strain HS) protein is Alanine--tRNA ligase.